The primary structure comprises 360 residues: MLGRLRTVVKASSSNSIRNYLGYTSGVQKKTVTVIPGDGIGPEITSSVMGVFQAAKVPIEWEIFDISGGQPISQELIASITRNKVALKGPLYTEILSGSQSRNMELRKALDLYAHVVPCKQIPGITARHDDVLVDFVVIRENTQGEYSGLEQVLTPGVVQSLKIITKEASERIARYAFEYAKANGRKKVTAVHKANIQKQTDGLFLATCTQIAKEYPEIKFENTIIDNCCMQLVKSPEQYDVMVTPNLYGNIVSNIGAALVGGPGLAGGANVGEGSIIFEMGAHHVAADIAGKDKANPTGLLLASVMMLKHLGLNEHATKVENAVKAVIKEGTLTSDIGGKSSTKQFTGAVIDYIEKNQN.

The transit peptide at 1–113 (MLGRLRTVVK…MELRKALDLY (113 aa)) directs the protein to the mitochondrion. Substrate contacts are provided by S101, N103, R107, and R140. D227 is a Mg(2+) binding site. NADP(+) contacts are provided by residues 284–290 (HHVAADI) and N297.

The protein belongs to the isocitrate and isopropylmalate dehydrogenases family. In terms of assembly, heterooligomer of catalytic and regulatory subunits. Mg(2+) is required as a cofactor. Mn(2+) serves as cofactor.

The protein localises to the mitochondrion. It catalyses the reaction D-threo-isocitrate + NAD(+) = 2-oxoglutarate + CO2 + NADH. Its function is as follows. Performs an essential role in the oxidative function of the citric acid cycle. The sequence is that of Isocitrate dehydrogenase [NAD] regulatory subunit B, mitochondrial (idhB) from Dictyostelium discoideum (Social amoeba).